A 507-amino-acid polypeptide reads, in one-letter code: MSETSEDEQTQLQTSDEEEDLGSEEEQEDEDNNHKEGDSEAALSGEDDKGSEDDAAEEQKLTWKDLGLNEALCQACDELKWKAPSKIQREAIPVALQGKDVIGLAETGSGKTGAFALPILHALLENPQRYFALVLTPTRELAFQIGEQFEALGSGIGIKCCVVVGGMDMVAQGLQLAKKPHIIIATPGRLVDHLENMKGFNLKAIKYLVMDEADRILNMDFEVELDKILKVLPRERRTFLFSATMTKKVKKLQRASLKDPVKVEVSNKYQTVEQLQQSYLFIPVKYKDVYLVHILNELAGNSFMIFCSTCNNTVKTALMLRALGLAAIPLHGQMSQNKRLAALNKFKAKNRSILISTDVASRGLDIPHVDVVVNFDIPTHSKDYIHRVGRTARAGRSGKAITLVSQYDIELYQRIEHLLGKQLTLYKCEEDEVMALQERVAEAQRTAKLELKDLEDTRGGHKRGGDTHDDSENFTGARKRMKPMGGTGGGGRKSFGKKNWSKGKQKR.

The span at 1–31 shows a compositional bias: acidic residues; that stretch reads MSETSEDEQTQLQTSDEEEDLGSEEEQEDED. The disordered stretch occupies residues 1 to 58; it reads MSETSEDEQTQLQTSDEEEDLGSEEEQEDEDNNHKEGDSEAALSGEDDKGSEDDAAEE. The Q motif signature appears at 61–89; sequence LTWKDLGLNEALCQACDELKWKAPSKIQR. The region spanning 92-263 is the Helicase ATP-binding domain; sequence IPVALQGKDV…RASLKDPVKV (172 aa). An ATP-binding site is contributed by 105-112; that stretch reads AETGSGKT. Positions 211 to 214 match the DEAD box motif; the sequence is DEAD. The Helicase C-terminal domain maps to 290–434; it reads YLVHILNELA…LYKCEEDEVM (145 aa). A coiled-coil region spans residues 426–453; that stretch reads YKCEEDEVMALQERVAEAQRTAKLELKD. Residues 451–471 are compositionally biased toward basic and acidic residues; the sequence is LKDLEDTRGGHKRGGDTHDDS. Residues 451-507 are disordered; the sequence is LKDLEDTRGGHKRGGDTHDDSENFTGARKRMKPMGGTGGGGRKSFGKKNWSKGKQKR. Residues 494–507 show a composition bias toward basic residues; that stretch reads SFGKKNWSKGKQKR.

The protein belongs to the DEAD box helicase family. DDX47/RRP3 subfamily.

Its subcellular location is the nucleus. It is found in the nucleolus. The enzyme catalyses ATP + H2O = ADP + phosphate + H(+). Its function is as follows. Part of a translational control module, also containing ath/DHX33 and ais/DDX52, which coordinates germline stem cell differentiation with ribosome biogenesis during oogenesis. This module allows for coregulation of ribosomal proteins and non1/GTPBP4, a p53 repressor, preventing p53 stabilization, cell cycle arrest and loss of stem cell differentiation. With atos, adjusts transcription and translation of a subset of OXPHOS genes in macrophages to increase mitochondrial bioenergetics and allow tissue invasion. The protein is ATP-dependent RNA helicase DDX47 of Drosophila melanogaster (Fruit fly).